Here is a 158-residue protein sequence, read N- to C-terminus: uncharacterized protein (158 aa).

This sequence belongs to the SixA phosphatase family.

This is an uncharacterized protein from Mycobacterium tuberculosis (strain CDC 1551 / Oshkosh).